A 357-amino-acid polypeptide reads, in one-letter code: Peptide chain release factor 1 (357 aa).

At Q235 the chain carries N5-methylglutamine. The segment at K285 to E305 is disordered.

It belongs to the prokaryotic/mitochondrial release factor family. Post-translationally, methylated by PrmC. Methylation increases the termination efficiency of RF1.

It localises to the cytoplasm. Functionally, peptide chain release factor 1 directs the termination of translation in response to the peptide chain termination codons UAG and UAA. The polypeptide is Peptide chain release factor 1 (prfA) (Chlamydia pneumoniae (Chlamydophila pneumoniae)).